The sequence spans 306 residues: Type 2A encapsulin shell protein SrpI (306 aa).

Belongs to the encapsulin family. Family 2A subfamily. The 24.5 nm encapsulin nanocompartment is formed by 60 subunits; monomers form pentamers which assemble to form shells. There are 12 positively charged pores where the pentamers meet with a minimal pore diameter of 3.7 Angstroms as well 3-fold axis channels and dimer channels.

It is found in the encapsulin nanocompartment. Shell component of a type 2A encapsulin nanocompartment. Expression in E.coli generates nanocompartments with an average diameter of 25 nm. They can be disassembled by treatment with 6M guanidine hydrochloride and reassembled with cargo. The nanocompartment is probably involved in sulfur metabolism. Probably allows passage of cysteine into its interior; during growth in light the physiological pH is 8-8.4, about 30-54% of free cysteine (charge -1) would be able to pass through the shell. The polypeptide is Type 2A encapsulin shell protein SrpI (Synechococcus elongatus (strain ATCC 33912 / PCC 7942 / FACHB-805) (Anacystis nidulans R2)).